Here is a 618-residue protein sequence, read N- to C-terminus: DnaJ homolog subfamily C member 2 (618 aa).

One can recognise a J domain in the interval 85 to 158; the sequence is DHYAVLGLAH…VKRRAFDSVD (74 aa). 3 disordered regions span residues 281–315, 330–349, and 419–448; these read KEEEKARKESEKKAKVEAKKREQEEKERARQQQEE, QAAQQAKKEKEAQKKAIKKE, and LQKEKDAELQAQQAARGSEHSSAAGGQNNR. Residues 428–448 show a composition bias toward polar residues; sequence QAQQAARGSEHSSAAGGQNNR. SANT domains follow at residues 445 to 507 and 548 to 603; these read QNNR…KLDP and SNAA…EMIK.

In terms of assembly, component of ribosome-associated complex (RAC).

Its subcellular location is the nucleus. The protein resides in the cytoplasm. The protein localises to the cytosol. Acts both as a chaperone in the cytosol and as a chromatin regulator in the nucleus. When cytosolic, acts as a molecular chaperone: component of the ribosome-associated complex (RAC), a complex involved in folding or maintaining nascent polypeptides in a folding-competent state. When nuclear, mediates the switching from polycomb-repressed genes to an active state: specifically recruited at histone H2A ubiquitinated at 'Lys-119' (H2AK119ub), and promotes the displacement of the polycomb PRC1 complex from chromatin, thereby facilitating transcription activation. This is DnaJ homolog subfamily C member 2 (dnajc2) from Danio rerio (Zebrafish).